A 72-amino-acid polypeptide reads, in one-letter code: NAD(P)H-quinone oxidoreductase subunit O (72 aa).

It belongs to the complex I NdhO subunit family. In terms of assembly, NDH-1 can be composed of about 15 different subunits; different subcomplexes with different compositions have been identified which probably have different functions.

The protein resides in the cellular thylakoid membrane. The catalysed reaction is a plastoquinone + NADH + (n+1) H(+)(in) = a plastoquinol + NAD(+) + n H(+)(out). It catalyses the reaction a plastoquinone + NADPH + (n+1) H(+)(in) = a plastoquinol + NADP(+) + n H(+)(out). Its function is as follows. NDH-1 shuttles electrons from an unknown electron donor, via FMN and iron-sulfur (Fe-S) centers, to quinones in the respiratory and/or the photosynthetic chain. The immediate electron acceptor for the enzyme in this species is believed to be plastoquinone. Couples the redox reaction to proton translocation, and thus conserves the redox energy in a proton gradient. Cyanobacterial NDH-1 also plays a role in inorganic carbon-concentration. The sequence is that of NAD(P)H-quinone oxidoreductase subunit O from Synechococcus sp. (strain JA-3-3Ab) (Cyanobacteria bacterium Yellowstone A-Prime).